The primary structure comprises 232 residues: Large ribosomal subunit protein uL1 (232 aa).

This sequence belongs to the universal ribosomal protein uL1 family. As to quaternary structure, part of the 50S ribosomal subunit.

Its function is as follows. Binds directly to 23S rRNA. The L1 stalk is quite mobile in the ribosome, and is involved in E site tRNA release. Functionally, protein L1 is also a translational repressor protein, it controls the translation of the L11 operon by binding to its mRNA. The polypeptide is Large ribosomal subunit protein uL1 (Paraburkholderia phytofirmans (strain DSM 17436 / LMG 22146 / PsJN) (Burkholderia phytofirmans)).